Consider the following 201-residue polypeptide: Alanine--tRNA ligase (201 aa).

The protein belongs to the class-II aminoacyl-tRNA synthetase family. The cofactor is Zn(2+).

The protein localises to the cytoplasm. The catalysed reaction is tRNA(Ala) + L-alanine + ATP = L-alanyl-tRNA(Ala) + AMP + diphosphate. Catalyzes the attachment of alanine to tRNA(Ala) in a two-step reaction: alanine is first activated by ATP to form Ala-AMP and then transferred to the acceptor end of tRNA(Ala). Also edits incorrectly charged Ser-tRNA(Ala) and Gly-tRNA(Ala) via its editing domain. This chain is Alanine--tRNA ligase (alaS), found in Rhizobium leguminosarum bv. viciae.